A 70-amino-acid polypeptide reads, in one-letter code: uncharacterized protein (70 aa).

A helical membrane pass occupies residues 4–24 (VKTIAMLAMLVIVAALIYMGY).

It is found in the host membrane. This is an uncharacterized protein from Dryophytes versicolor (chameleon treefrog).